The following is a 109-amino-acid chain: Large ribosomal subunit protein uL23 (109 aa).

This sequence belongs to the universal ribosomal protein uL23 family. In terms of assembly, part of the 50S ribosomal subunit. Contacts protein L29, and trigger factor when it is bound to the ribosome.

Its function is as follows. One of the early assembly proteins it binds 23S rRNA. One of the proteins that surrounds the polypeptide exit tunnel on the outside of the ribosome. Forms the main docking site for trigger factor binding to the ribosome. This is Large ribosomal subunit protein uL23 from Prosthecochloris aestuarii (strain DSM 271 / SK 413).